We begin with the raw amino-acid sequence, 474 residues long: Kynureninase 2 (474 aa).

Pyridoxal 5'-phosphate contacts are provided by residues Leu-144, Thr-145, 172-175 (FPSD), Asp-258, His-261, and Tyr-283. Lys-284 is subject to N6-(pyridoxal phosphate)lysine. Residues Trp-323 and Thr-351 each contribute to the pyridoxal 5'-phosphate site.

The protein belongs to the kynureninase family. In terms of assembly, homodimer. It depends on pyridoxal 5'-phosphate as a cofactor.

The protein resides in the cytoplasm. It catalyses the reaction L-kynurenine + H2O = anthranilate + L-alanine + H(+). The catalysed reaction is 3-hydroxy-L-kynurenine + H2O = 3-hydroxyanthranilate + L-alanine + H(+). It functions in the pathway amino-acid degradation; L-kynurenine degradation; L-alanine and anthranilate from L-kynurenine: step 1/1. The protein operates within cofactor biosynthesis; NAD(+) biosynthesis; quinolinate from L-kynurenine: step 2/3. Catalyzes the cleavage of L-kynurenine (L-Kyn) and L-3-hydroxykynurenine (L-3OHKyn) into anthranilic acid (AA) and 3-hydroxyanthranilic acid (3-OHAA), respectively. The polypeptide is Kynureninase 2 (bna5-2) (Emericella nidulans (strain FGSC A4 / ATCC 38163 / CBS 112.46 / NRRL 194 / M139) (Aspergillus nidulans)).